Reading from the N-terminus, the 346-residue chain is Cyclin-dependent kinase 2 (346 aa).

Residue Met-1 is modified to N-acetylmethionine. In terms of domain architecture, Protein kinase spans 4 to 334; the sequence is FQKVEKIGEG…AKAALAHPFF (331 aa). Lys-6 bears the N6-acetyllysine mark. An ATP-binding site is contributed by 10 to 18; sequence IGEGTYGVV. The residue at position 14 (Thr-14) is a Phosphothreonine. Position 15 is a phosphotyrosine; by WEE1 (Tyr-15). Tyr-19 carries the phosphotyrosine modification. ATP contacts are provided by residues Lys-33, 81-83, and Asp-86; that span reads EFL. Asp-127 functions as the Proton acceptor in the catalytic mechanism. ATP-binding positions include 129–132 and Asp-145; that span reads KPQN. Asn-132 and Asp-145 together coordinate Mg(2+). Position 160 is a phosphothreonine; by CAK and CCRK (Thr-160). The residue at position 218 (Ser-218) is a Phosphoserine.

Belongs to the protein kinase superfamily. CMGC Ser/Thr protein kinase family. CDC2/CDKX subfamily. As to quaternary structure, found in a complex with CABLES1, CCNA1 and CCNE1. Interacts with CABLES1. Interacts with UHRF2. Part of a complex consisting of UHRF2, CDK2 and CCNE1. Interacts with the Speedy/Ringo proteins SPDYA and SPDYC. Interaction with SPDYA promotes kinase activation via a conformation change that alleviates obstruction of the substrate-binding cleft by the T-loop. Found in a complex with both SPDYA and CDKN1B/KIP1. Binds to RB1 and CDK7. Binding to CDKN1A (p21) leads to CDK2/cyclin E inactivation at the G1-S phase DNA damage checkpoint, thereby arresting cells at the G1-S transition during DNA repair. Associated with PTPN6 and beta-catenin/CTNNB1. Interacts with CACUL1. May interact with CEP63. Interacts with ANKRD17. Interacts with CEBPA (when phosphorylated). Forms a ternary complex with CCNA2 and CDKN1B; CDKN1B inhibits the kinase activity of CDK2 through conformational rearrangements. Interacts with cyclins A, B1, B3, D, or E. Interacts with CDK2AP2. Mg(2+) is required as a cofactor. Phosphorylated at Thr-160 by CDK7 in a CAK complex. Phosphorylation at Thr-160 promotes kinase activity, whereas phosphorylation at Tyr-15 by WEE1 reduces slightly kinase activity. Phosphorylated on Thr-14 and Tyr-15 during S and G2 phases before being dephosphorylated by CDC25A. In terms of processing, nitrosylated after treatment with nitric oxide (DETA-NO).

The protein resides in the cytoplasm. It is found in the cytoskeleton. Its subcellular location is the microtubule organizing center. The protein localises to the centrosome. It localises to the nucleus. The protein resides in the cajal body. It is found in the endosome. It catalyses the reaction L-seryl-[protein] + ATP = O-phospho-L-seryl-[protein] + ADP + H(+). The enzyme catalyses L-threonyl-[protein] + ATP = O-phospho-L-threonyl-[protein] + ADP + H(+). Phosphorylation at Thr-14 or Tyr-15 inactivates the enzyme, while phosphorylation at Thr-160 activates it. Stimulated by MYC. Inactivated by CDKN1A (p21). Functionally, serine/threonine-protein kinase involved in the control of the cell cycle; essential for meiosis, but dispensable for mitosis. Phosphorylates CABLES1, CTNNB1, CDK2AP2, ERCC6, NBN, USP37, p53/TP53, NPM1, CDK7, RB1, BRCA2, MYC, NPAT, EZH2. Triggers duplication of centrosomes and DNA. Acts at the G1-S transition to promote the E2F transcriptional program and the initiation of DNA synthesis, and modulates G2 progression; controls the timing of entry into mitosis/meiosis by controlling the subsequent activation of cyclin B/CDK1 by phosphorylation, and coordinates the activation of cyclin B/CDK1 at the centrosome and in the nucleus. Crucial role in orchestrating a fine balance between cellular proliferation, cell death, and DNA repair in embryonic stem cells (ESCs). Activity of CDK2 is maximal during S phase and G2; activated by interaction with cyclin E during the early stages of DNA synthesis to permit G1-S transition, and subsequently activated by cyclin A2 (cyclin A1 in germ cells) during the late stages of DNA replication to drive the transition from S phase to mitosis, the G2 phase. EZH2 phosphorylation promotes H3K27me3 maintenance and epigenetic gene silencing. Cyclin E/CDK2 prevents oxidative stress-mediated Ras-induced senescence by phosphorylating MYC. Involved in G1-S phase DNA damage checkpoint that prevents cells with damaged DNA from initiating mitosis; regulates homologous recombination-dependent repair by phosphorylating BRCA2, this phosphorylation is low in S phase when recombination is active, but increases as cells progress towards mitosis. In response to DNA damage, double-strand break repair by homologous recombination a reduction of CDK2-mediated BRCA2 phosphorylation. Involved in regulation of telomere repair by mediating phosphorylation of NBN. Phosphorylation of RB1 disturbs its interaction with E2F1. NPM1 phosphorylation by cyclin E/CDK2 promotes its dissociation from unduplicated centrosomes, thus initiating centrosome duplication. Cyclin E/CDK2-mediated phosphorylation of NPAT at G1-S transition and until prophase stimulates the NPAT-mediated activation of histone gene transcription during S phase. Required for vitamin D-mediated growth inhibition by being itself inactivated. Involved in the nitric oxide- (NO) mediated signaling in a nitrosylation/activation-dependent manner. USP37 is activated by phosphorylation and thus triggers G1-S transition. CTNNB1 phosphorylation regulates insulin internalization. Phosphorylates FOXP3 and negatively regulates its transcriptional activity and protein stability. Phosphorylates ERCC6 which is essential for its chromatin remodeling activity at DNA double-strand breaks. Acts as a regulator of the phosphatidylinositol 3-kinase/protein kinase B signal transduction by mediating phosphorylation of the C-terminus of protein kinase B (PKB/AKT1 and PKB/AKT2), promoting its activation. The sequence is that of Cyclin-dependent kinase 2 (Cdk2) from Mus musculus (Mouse).